A 104-amino-acid chain; its full sequence is Large ribosomal subunit protein uL24 (104 aa).

The protein belongs to the universal ribosomal protein uL24 family. As to quaternary structure, part of the 50S ribosomal subunit.

Functionally, one of two assembly initiator proteins, it binds directly to the 5'-end of the 23S rRNA, where it nucleates assembly of the 50S subunit. In terms of biological role, one of the proteins that surrounds the polypeptide exit tunnel on the outside of the subunit. In Shewanella piezotolerans (strain WP3 / JCM 13877), this protein is Large ribosomal subunit protein uL24.